The primary structure comprises 398 residues: Leucine aminopeptidase 1 (398 aa).

A signal peptide spans 1–20 (MKFLQTSLIAAALPAALVSG). A propeptide spanning residues 21-87 (RFVIENEGDN…LRAWTQSQAS (67 aa)) is cleaved from the precursor. Residue N179 is glycosylated (N-linked (GlcNAc...) asparagine). Zn(2+)-binding residues include H187, D206, E245, and D272. C321 and C325 are disulfide-bonded. H354 lines the Zn(2+) pocket.

The protein belongs to the peptidase M28 family. M28E subfamily. Monomer. Zn(2+) serves as cofactor.

Its subcellular location is the secreted. Functionally, extracellular aminopeptidase that allows assimilation of proteinaceous substrates. This chain is Leucine aminopeptidase 1 (lap1), found in Trichoderma harzianum (Hypocrea lixii).